A 919-amino-acid chain; its full sequence is MEYKNTLNLPKTSFPMKANLVNKEKVFLEEWEKMDLYNYVLEQRKGKPLFVLHDGPPYANGHIHIGTALNKILKDIVVKYKTMRGYRAPYVPGWDTHGLPIEHRVSQELGEKIKEMSPAEIRKKCEEFALRFVDIQREEFKRLGVRGDWENPYITLKPDYEVKILDVFKTLVEQGNVYRSLKPIYWCPRCRTALAEAEIEYHDHKSPSIYVKFRSKEDPNFFIVIWTTTPWTLPANVGIALHPDYEYSVVKVGEEKWVIATDLLDAFSKETGIDCSNVVEKIKGKDLEGKEFVHPIFDDRTSRVILADYVSLETGTGCVHIAPGHGEEDYIYGHVQYGLPIVSPVDEEGRFTEEAGKYKGMFIEDANEVIIEDLKRKGILVHASSITHSYPHCWRCKGPVIFRATEQWFISVDHNNLRQKVLEEIDKVKWIPEWGRNRIRSMVEERPDWCISRQRVWGTPIPAVKCKECGEVVLDPKVIEHFMKIVEKEGTNAWFEKEVEELIPEDFVCPKCGKRSFEKMLDTLDVWIDSGASFEYITTKREDHPFPLDMYLEGSDQHRGWFHSSIFLAVAKRGSAPYKEVLTHGFIKDEQGRKMSKSLGNVVDPMEVVEKYGAEILRLWLASSDYFNDIKISMRIVEQQTEVYRKIRNTFRFLLGNLEDFDPELDRVPHEKLLTIDRWALGRLQEIIKRATEYYDSYEFSKVYNLVVKYCTTELSSLYLDVVKDRLYVEAKDSIYRRSAQTVMHEILISLMKILAPIMTFTMEEVYSHLHEKDRKYKTVQAEYWPEYREEFIDRKLMEDFEKLLSIREDVLKALEEKRQQDVIGHSLDAEVVLVPKNDTIKALLEKYRDILEELFIVSKVSLSDASGELKGELVEVTVKHAEGEKCQRCWKYTTEISASEDFPGVCPRCLAVLKGERK.

The short motif at 57 to 67 is the 'HIGH' region element; the sequence is PYANGHIHIGT. Residue glutamate 553 coordinates L-isoleucyl-5'-AMP. Positions 594–598 match the 'KMSKS' region motif; that stretch reads KMSKS. Lysine 597 contacts ATP. Residues cysteine 887, cysteine 890, cysteine 907, and cysteine 910 each contribute to the Zn(2+) site.

This sequence belongs to the class-I aminoacyl-tRNA synthetase family. IleS type 1 subfamily. As to quaternary structure, monomer. The cofactor is Zn(2+).

It is found in the cytoplasm. The enzyme catalyses tRNA(Ile) + L-isoleucine + ATP = L-isoleucyl-tRNA(Ile) + AMP + diphosphate. Catalyzes the attachment of isoleucine to tRNA(Ile). As IleRS can inadvertently accommodate and process structurally similar amino acids such as valine, to avoid such errors it has two additional distinct tRNA(Ile)-dependent editing activities. One activity is designated as 'pretransfer' editing and involves the hydrolysis of activated Val-AMP. The other activity is designated 'posttransfer' editing and involves deacylation of mischarged Val-tRNA(Ile). The chain is Isoleucine--tRNA ligase from Thermotoga maritima (strain ATCC 43589 / DSM 3109 / JCM 10099 / NBRC 100826 / MSB8).